Here is a 401-residue protein sequence, read N- to C-terminus: Aspartokinase (401 aa).

Belongs to the aspartokinase family.

The enzyme catalyses L-aspartate + ATP = 4-phospho-L-aspartate + ADP. Its pathway is amino-acid biosynthesis; L-lysine biosynthesis via DAP pathway; (S)-tetrahydrodipicolinate from L-aspartate: step 1/4. The protein operates within amino-acid biosynthesis; L-methionine biosynthesis via de novo pathway; L-homoserine from L-aspartate: step 1/3. It participates in amino-acid biosynthesis; L-threonine biosynthesis; L-threonine from L-aspartate: step 1/5. This Rickettsia felis (strain ATCC VR-1525 / URRWXCal2) (Rickettsia azadi) protein is Aspartokinase (lysC).